A 424-amino-acid polypeptide reads, in one-letter code: Enolase (424 aa).

(2R)-2-phosphoglycerate is bound at residue glutamine 162. Glutamate 204 acts as the Proton donor in catalysis. The Mg(2+) site is built by aspartate 241, glutamate 284, and aspartate 311. (2R)-2-phosphoglycerate is bound by residues lysine 336, arginine 365, serine 366, and lysine 387. Lysine 336 (proton acceptor) is an active-site residue.

It belongs to the enolase family. The cofactor is Mg(2+).

The protein resides in the cytoplasm. Its subcellular location is the secreted. It localises to the cell surface. The catalysed reaction is (2R)-2-phosphoglycerate = phosphoenolpyruvate + H2O. It participates in carbohydrate degradation; glycolysis; pyruvate from D-glyceraldehyde 3-phosphate: step 4/5. Catalyzes the reversible conversion of 2-phosphoglycerate (2-PG) into phosphoenolpyruvate (PEP). It is essential for the degradation of carbohydrates via glycolysis. The protein is Enolase of Parvibaculum lavamentivorans (strain DS-1 / DSM 13023 / NCIMB 13966).